The primary structure comprises 116 residues: MRHYEIVFMVHPDQSEQVPGMIERYSETIKQGGGQIHRLEDWGRRQLAYPINKLHKAHYVLLNIEASAEVVEELETAFRYNDAVLRNMIMRKKESITEPSPLTKPKEDRKGDSEAA.

Residues 94–116 (ESITEPSPLTKPKEDRKGDSEAA) are disordered. A compositionally biased stretch (basic and acidic residues) spans 104-116 (KPKEDRKGDSEAA).

The protein belongs to the bacterial ribosomal protein bS6 family.

Its function is as follows. Binds together with bS18 to 16S ribosomal RNA. This Idiomarina loihiensis (strain ATCC BAA-735 / DSM 15497 / L2-TR) protein is Small ribosomal subunit protein bS6.